The following is a 170-amino-acid chain: Urease accessory protein UreE (170 aa).

The interval 144-170 (GGHSHDDHDHHHGHHEHDHEHHHHHHD) is disordered. Residues 146–162 (HSHDDHDHHHGHHEHDH) are compositionally biased toward basic and acidic residues.

This sequence belongs to the UreE family.

Its subcellular location is the cytoplasm. In terms of biological role, involved in urease metallocenter assembly. Binds nickel. Probably functions as a nickel donor during metallocenter assembly. This Brucella anthropi (strain ATCC 49188 / DSM 6882 / CCUG 24695 / JCM 21032 / LMG 3331 / NBRC 15819 / NCTC 12168 / Alc 37) (Ochrobactrum anthropi) protein is Urease accessory protein UreE.